Consider the following 1274-residue polypeptide: Vacuolar protein sorting-associated protein 8 (1274 aa).

N-acetylmethionine is present on methionine 1. WD repeat units follow at residues 75–119 (THVY…QTIL), 131–170 (SIRS…RVKP), and 193–233 (HVNK…FWQL). 2 CHCR repeats span residues 507–665 (LQQS…YPQN) and 915–1092 (FDLL…KYPS). The RING-type; atypical zinc-finger motif lies at 1198-1266 (CEICGKKIWG…PDEYSCLICQ (69 aa)).

Belongs to the VPS8 family.

Its subcellular location is the golgi apparatus. The protein localises to the golgi stack. In terms of biological role, required for localization and recycling of the CPY sorting receptor (VPS10) to the late-Golgi compartment. Involved in the retention of proteins to the late-Golgi. Plays an integral role in the complex vacuolar protein sorting process. This chain is Vacuolar protein sorting-associated protein 8 (VPS8), found in Saccharomyces cerevisiae (strain ATCC 204508 / S288c) (Baker's yeast).